A 510-amino-acid polypeptide reads, in one-letter code: Probable gamma-aminobutyrate transaminase 3, mitochondrial (510 aa).

The transit peptide at 1-41 (MICRSLLLLRSNAASKASSIVKHVAATGCLPEYSSEAPARY) directs the protein to the mitochondrion. A pyridoxal 5'-phosphate-binding site is contributed by 166–167 (GS). Tyr-199 contributes to the substrate binding site. Residue Asp-306 participates in pyridoxal 5'-phosphate binding. Lys-335 is a substrate binding site. The residue at position 335 (Lys-335) is an N6-(pyridoxal phosphate)lysine.

The protein belongs to the class-III pyridoxal-phosphate-dependent aminotransferase family.

Its subcellular location is the mitochondrion. It carries out the reaction 4-aminobutanoate + pyruvate = succinate semialdehyde + L-alanine. It catalyses the reaction 4-aminobutanoate + glyoxylate = succinate semialdehyde + glycine. In terms of biological role, transaminase that degrades gamma-amino butyric acid (GABA). The polypeptide is Probable gamma-aminobutyrate transaminase 3, mitochondrial (Oryza sativa subsp. indica (Rice)).